The primary structure comprises 946 residues: Translation initiation factor IF-2 (946 aa).

Disordered regions lie at residues 58 to 250 (AERK…AVVI) and 301 to 324 (VSRD…KSLS). Low complexity-rich tracts occupy residues 102-165 (EPPQ…QPAA) and 174-185 (AQPSAPQPAAAQ). Residues 186-211 (PRPPQPPMPSRPPPAGYRPAPPPGAR) are compositionally biased toward pro residues. The segment covering 212-229 (PPMSAAPGAPAQPGAAAQ) has biased composition (low complexity). The 170-residue stretch at 445-614 (IRPPVVTVMG…ALQSEVLELK (170 aa)) folds into the tr-type G domain. The tract at residues 454–461 (GHVDHGKT) is G1. 454-461 (GHVDHGKT) is a binding site for GTP. Positions 479-483 (GITQH) are G2. Residues 500–503 (DTPG) form a G3 region. Residues 500-504 (DTPGH) and 554-557 (NKVD) contribute to the GTP site. A G4 region spans residues 554–557 (NKVD). The tract at residues 590 to 592 (SAR) is G5.

This sequence belongs to the TRAFAC class translation factor GTPase superfamily. Classic translation factor GTPase family. IF-2 subfamily.

Its subcellular location is the cytoplasm. One of the essential components for the initiation of protein synthesis. Protects formylmethionyl-tRNA from spontaneous hydrolysis and promotes its binding to the 30S ribosomal subunits. Also involved in the hydrolysis of GTP during the formation of the 70S ribosomal complex. This chain is Translation initiation factor IF-2, found in Anaeromyxobacter sp. (strain K).